We begin with the raw amino-acid sequence, 203 residues long: Large ribosomal subunit protein bL25 (203 aa).

Belongs to the bacterial ribosomal protein bL25 family. CTC subfamily. Part of the 50S ribosomal subunit; part of the 5S rRNA/L5/L18/L25 subcomplex. Contacts the 5S rRNA. Binds to the 5S rRNA independently of L5 and L18.

Functionally, this is one of the proteins that binds to the 5S RNA in the ribosome where it forms part of the central protuberance. This is Large ribosomal subunit protein bL25 from Wolbachia pipientis subsp. Culex pipiens (strain wPip).